We begin with the raw amino-acid sequence, 699 residues long: SPX domain-containing membrane protein At4g22990 (699 aa).

The 144-residue stretch at 2 to 145 (VAFGKKLKER…GYRFTNYYVK (144 aa)) folds into the SPX domain. Helical transmembrane passes span 249–269 (FMSL…TYII), 280–300 (LGAA…AQLF), 317–337 (LIFS…AFDF), 339–358 (SIAV…ARAV), 377–397 (AGFV…AGLL), and 413–433 (LPGW…AISF). Residues 475–490 (IEEQGEDECDGSEEAS) show a composition bias toward acidic residues. Residues 475–494 (IEEQGEDECDGSEEASEDSR) are disordered. Transmembrane regions (helical) follow at residues 515–535 (LLIY…SSVI), 546–566 (SVAI…LVVG), 578–598 (ILLV…HVVV), 606–626 (VCSG…NLSL), and 671–691 (MLLN…IVAT).

The protein belongs to the major facilitator superfamily.

It is found in the membrane. The protein is SPX domain-containing membrane protein At4g22990 of Arabidopsis thaliana (Mouse-ear cress).